The following is a 416-amino-acid chain: Adenylosuccinate synthetase (416 aa).

Residues 13–19 (GDEGKGK) and 41–43 (GHT) contribute to the GTP site. Aspartate 14 (proton acceptor) is an active-site residue. Residues aspartate 14 and glycine 41 each coordinate Mg(2+). IMP is bound by residues 14-17 (DEGK), 39-42 (NAGH), threonine 126, arginine 140, glutamine 220, threonine 235, and arginine 299. The active-site Proton donor is histidine 42. 295–301 (VSTGRKR) serves as a coordination point for substrate. Residues arginine 301, 327–329 (KLD), and 405–407 (STS) each bind GTP.

The protein belongs to the adenylosuccinate synthetase family. As to quaternary structure, homodimer. It depends on Mg(2+) as a cofactor.

Its subcellular location is the cytoplasm. The catalysed reaction is IMP + L-aspartate + GTP = N(6)-(1,2-dicarboxyethyl)-AMP + GDP + phosphate + 2 H(+). It functions in the pathway purine metabolism; AMP biosynthesis via de novo pathway; AMP from IMP: step 1/2. Functionally, plays an important role in the de novo pathway of purine nucleotide biosynthesis. Catalyzes the first committed step in the biosynthesis of AMP from IMP. The chain is Adenylosuccinate synthetase from Campylobacter jejuni subsp. jejuni serotype O:6 (strain 81116 / NCTC 11828).